The primary structure comprises 301 residues: 4-hydroxy-tetrahydrodipicolinate synthase (301 aa).

Position 55 (Thr-55) interacts with pyruvate. Catalysis depends on Tyr-143, which acts as the Proton donor/acceptor. The active-site Schiff-base intermediate with substrate is Lys-171. A pyruvate-binding site is contributed by Ile-213.

This sequence belongs to the DapA family. In terms of assembly, homotetramer; dimer of dimers.

It localises to the cytoplasm. It catalyses the reaction L-aspartate 4-semialdehyde + pyruvate = (2S,4S)-4-hydroxy-2,3,4,5-tetrahydrodipicolinate + H2O + H(+). It functions in the pathway amino-acid biosynthesis; L-lysine biosynthesis via DAP pathway; (S)-tetrahydrodipicolinate from L-aspartate: step 3/4. In terms of biological role, catalyzes the condensation of (S)-aspartate-beta-semialdehyde [(S)-ASA] and pyruvate to 4-hydroxy-tetrahydrodipicolinate (HTPA). This is 4-hydroxy-tetrahydrodipicolinate synthase from Psychrobacter arcticus (strain DSM 17307 / VKM B-2377 / 273-4).